A 486-amino-acid polypeptide reads, in one-letter code: Siroheme synthase (486 aa).

The segment at 1–203 (MNYFPIFANL…RQNTLAEREL (203 aa)) is precorrin-2 dehydrogenase /sirohydrochlorin ferrochelatase. NAD(+)-binding positions include 22–23 (AV) and 43–44 (KH). S128 bears the Phosphoserine mark. The segment at 217-486 (GSVSLVGAGP…LGTGQEQQAA (270 aa)) is uroporphyrinogen-III C-methyltransferase. Residue P226 coordinates S-adenosyl-L-methionine. The active-site Proton acceptor is the D249. K271 functions as the Proton donor in the catalytic mechanism. Residues 302-304 (GGD), V307, 332-333 (TA), M384, and G413 contribute to the S-adenosyl-L-methionine site.

The protein in the N-terminal section; belongs to the precorrin-2 dehydrogenase / sirohydrochlorin ferrochelatase family. It in the C-terminal section; belongs to the precorrin methyltransferase family.

It carries out the reaction uroporphyrinogen III + 2 S-adenosyl-L-methionine = precorrin-2 + 2 S-adenosyl-L-homocysteine + H(+). The enzyme catalyses precorrin-2 + NAD(+) = sirohydrochlorin + NADH + 2 H(+). It catalyses the reaction siroheme + 2 H(+) = sirohydrochlorin + Fe(2+). Its pathway is cofactor biosynthesis; adenosylcobalamin biosynthesis; precorrin-2 from uroporphyrinogen III: step 1/1. The protein operates within cofactor biosynthesis; adenosylcobalamin biosynthesis; sirohydrochlorin from precorrin-2: step 1/1. It functions in the pathway porphyrin-containing compound metabolism; siroheme biosynthesis; precorrin-2 from uroporphyrinogen III: step 1/1. It participates in porphyrin-containing compound metabolism; siroheme biosynthesis; siroheme from sirohydrochlorin: step 1/1. Its pathway is porphyrin-containing compound metabolism; siroheme biosynthesis; sirohydrochlorin from precorrin-2: step 1/1. Functionally, multifunctional enzyme that catalyzes the SAM-dependent methylations of uroporphyrinogen III at position C-2 and C-7 to form precorrin-2 via precorrin-1. Then it catalyzes the NAD-dependent ring dehydrogenation of precorrin-2 to yield sirohydrochlorin. Finally, it catalyzes the ferrochelation of sirohydrochlorin to yield siroheme. This is Siroheme synthase from Neisseria meningitidis serogroup A / serotype 4A (strain DSM 15465 / Z2491).